We begin with the raw amino-acid sequence, 682 residues long: Zinc finger protein 16 (682 aa).

The segment covering 1–10 has biased composition (basic and acidic residues); the sequence is MPSLRTRREE. The segment at 1–43 is disordered; that stretch reads MPSLRTRREEAEMELSVPGPSPWTPAAQARVRDAPAVTHPGSA. The interval 62–210 is necessary for transcription activation; sequence YQQPDCDTRT…GVPTAESPLI (149 aa). Residues 209–231 form a C2H2-type 1; degenerate zinc finger; that stretch reads LICNECGKTFQGNPDLIQRQIVH. The C2H2-type 2; degenerate zinc finger occupies 237–259; that stretch reads FMCDDCGKTFSQNSVLKNRHRSH. Residue lysine 253 forms a Glycyl lysine isopeptide (Lys-Gly) (interchain with G-Cter in SUMO2) linkage. 8 consecutive C2H2-type zinc fingers follow at residues 265-287, 293-315, 321-343, 349-371, 377-399, 405-427, 433-455, and 461-483; these read YQCSECGKAFRGHSDFSRHQSHH, YMCNECGKAFSQNSSLKKHQKSH, YECNECGKAFRRSSNLIQHQRIH, YVCSECGKAFRRSSNLIKHHRTH, FECGECGKAFSQSAHLRKHQRVH, YECNDCGKPFSRVSNLIKHHRVH, YKCSDCGKAFSQSSSLIQHRRIH, and HVCNVCGKAFSYSSVLRKHQIIH. Required for nuclear localization regions lie at residues 268-393 and 341-373; these read SECG…AHLR and RIHSGEKPYVCSECGKAFRRSSNLIKHHRTHTG. The interval 473–503 is required for nuclear localization; it reads SSVLRKHQIIHTGEKPYRCSVCGKAFSHSSA. At lysine 487 the chain carries N6-acetyllysine. 7 consecutive C2H2-type zinc fingers follow at residues 489–511, 517–539, 545–567, 573–595, 601–623, 629–651, and 657–679; these read YRCSVCGKAFSHSSALIQHQGVH, YACHECGKTFGRSSNLILHQRVH, YECTECGKTFSQSSTLIQHQRIH, HECNQCGKAFNRSSNLIHHQKVH, YTCVECGKGFSQSSHLIQHQIIH, YKCSECGKAFSQRSVLIQHQRIH, and YDCAACGKAFSQRSKLIKHQLIH.

This sequence belongs to the krueppel C2H2-type zinc-finger protein family. In terms of assembly, interacts with INCA1; the interaction inhibits INCA1 activity and induces the cell cycle process. In terms of tissue distribution, ubiquitous.

It localises to the nucleus. Acts as a transcriptional activator. Promotes cell proliferation by facilitating the cell cycle phase transition from the S to G2/M phase. Involved in both the hemin- and phorbol myristate acetate (PMA)-induced erythroid and megakaryocytic differentiation, respectively. Also plays a role as an inhibitor of cell apoptosis. The sequence is that of Zinc finger protein 16 (ZNF16) from Homo sapiens (Human).